The chain runs to 245 residues: 1-(5-phosphoribosyl)-5-[(5-phosphoribosylamino)methylideneamino] imidazole-4-carboxamide isomerase (245 aa).

Residue aspartate 8 is the Proton acceptor of the active site. Aspartate 130 acts as the Proton donor in catalysis.

This sequence belongs to the HisA/HisF family.

It localises to the cytoplasm. The enzyme catalyses 1-(5-phospho-beta-D-ribosyl)-5-[(5-phospho-beta-D-ribosylamino)methylideneamino]imidazole-4-carboxamide = 5-[(5-phospho-1-deoxy-D-ribulos-1-ylimino)methylamino]-1-(5-phospho-beta-D-ribosyl)imidazole-4-carboxamide. Its pathway is amino-acid biosynthesis; L-histidine biosynthesis; L-histidine from 5-phospho-alpha-D-ribose 1-diphosphate: step 4/9. In Pseudomonas fluorescens (strain ATCC BAA-477 / NRRL B-23932 / Pf-5), this protein is 1-(5-phosphoribosyl)-5-[(5-phosphoribosylamino)methylideneamino] imidazole-4-carboxamide isomerase.